The sequence spans 371 residues: Dead end protein homolog 1 (371 aa).

RRM domains lie at 85–163 (PQDI…ALDG) and 165–245 (PGNF…KLRS).

The protein resides in the nucleus. Its subcellular location is the cytoplasm. RNA-binding factor that positively regulates gene expression by prohibiting miRNA-mediated gene suppression. Relieves miRNA repression in germline cells. Prohibits the function of several miRNAs by blocking the accessibility of target mRNAs. Sequence-specific RNA-binding factor that binds to U-rich regions (URRs) in the 3'untranslated region (3'-UTR) of several mRNAs. Does not bind to miRNAs. May play a role during early embryonic survival. The protein is Dead end protein homolog 1 (dnd1) of Xenopus laevis (African clawed frog).